We begin with the raw amino-acid sequence, 656 residues long: DNA ligase (656 aa).

Residues 32-36 and 81-82 each bind NAD(+); these read DAVYD and SL. Residue lysine 112 is the N6-AMP-lysine intermediate of the active site. NAD(+)-binding residues include arginine 133, glutamate 167, and lysine 306. Cysteine 400, cysteine 403, cysteine 416, and cysteine 421 together coordinate Zn(2+). In terms of domain architecture, BRCT spans 577 to 656; that stretch reads KSSSVFNNKT…ELLKRLKELD (80 aa).

It belongs to the NAD-dependent DNA ligase family. LigA subfamily. It depends on Mg(2+) as a cofactor. The cofactor is Mn(2+).

It catalyses the reaction NAD(+) + (deoxyribonucleotide)n-3'-hydroxyl + 5'-phospho-(deoxyribonucleotide)m = (deoxyribonucleotide)n+m + AMP + beta-nicotinamide D-nucleotide.. Its function is as follows. DNA ligase that catalyzes the formation of phosphodiester linkages between 5'-phosphoryl and 3'-hydroxyl groups in double-stranded DNA using NAD as a coenzyme and as the energy source for the reaction. It is essential for DNA replication and repair of damaged DNA. The protein is DNA ligase of Helicobacter pylori (strain P12).